We begin with the raw amino-acid sequence, 282 residues long: HTH-type transcriptional activator RhaR (282 aa).

Positions 179 to 277 (DKLITRLAAS…GMTPSQWRHL (99 aa)) constitute an HTH araC/xylS-type domain. 2 consecutive DNA-binding regions (H-T-H motif) follow at residues 196 to 217 (DKFC…RQQT) and 244 to 267 (ISDI…TRET).

As to quaternary structure, binds DNA as a dimer.

Its subcellular location is the cytoplasm. Activates expression of the rhaSR operon in response to L-rhamnose. The polypeptide is HTH-type transcriptional activator RhaR (Escherichia coli (strain K12 / MC4100 / BW2952)).